The sequence spans 403 residues: MALRSYCRQLAAQVFRLKLCGNECPRNAPGCSFSLAGIKSLHEPTGVLARSSRCVKRWHRRSWHRCASLQMPSQKSHSDTTDFSRWTLAWGAVAFSLFGGSDEKTEEQKLEDELILLLKKAKYSMMIGELDAADGFLHRAVRLAHQMHNNDAIIYTYSLMANLAFVRGQLDNAEKLFKAAMSFMLSGGTPQDDNALIEMSLKLASIYATQNKNELAEHGFQFCTDSLEAKMDKQKDLPPESLSDEERKDTRLLLGLSLDARARYLAANHRFIGACRDYRHALQICQEEQGESHPQTLVLMSDLATVLDLRGKHDEALVYVKKAVELGQAAGHPEQHVLLGNMAGILMHNGEFEESAKLYQEALALAHTAGDAEAIEQLQEGLKELDNRRNAKDNSKVEDELKE.

The N-terminal 67 residues, 1–67, are a transit peptide targeting the mitochondrion; that stretch reads MALRSYCRQL…WHRRSWHRCA (67 aa). TPR repeat units lie at residues 154–187, 297–330, and 336–369; these read IYTY…MLSG, LVLM…GQAA, and HVLL…AHTA.

Belongs to the TTC19 family. Binds to the mature mitochondrial complex III dimer, after the incorporation of the Rieske protein (UQCRFS1). Interacts with UQCRC1 and UQCRFS1. Interacts with ZFYVE26 and CHMP4B.

The protein localises to the mitochondrion inner membrane. In terms of biological role, required for the preservation of the structural and functional integrity of mitochondrial respiratory complex III by allowing the physiological turnover of the Rieske protein UQCRFS1. Involved in the clearance of UQCRFS1 N-terminal fragments, which are produced upon incorporation into the complex III and whose presence is detrimental for its catalytic activity. In Danio rerio (Zebrafish), this protein is Tetratricopeptide repeat protein 19, mitochondrial (ttc19).